Here is a 98-residue protein sequence, read N- to C-terminus: Small ribosomal subunit protein uS19 (98 aa).

The tract at residues 77-98 (TRTYRGHAGGKSEKGGSAPRKK) is disordered.

Belongs to the universal ribosomal protein uS19 family.

Protein S19 forms a complex with S13 that binds strongly to the 16S ribosomal RNA. This is Small ribosomal subunit protein uS19 from Chlorobium phaeobacteroides (strain BS1).